The primary structure comprises 227 residues: Cytidylate kinase (227 aa).

An ATP-binding site is contributed by 7–15 (GPAGSGKST).

The protein belongs to the cytidylate kinase family. Type 1 subfamily.

It localises to the cytoplasm. The catalysed reaction is CMP + ATP = CDP + ADP. The enzyme catalyses dCMP + ATP = dCDP + ADP. This Salinibacter ruber (strain DSM 13855 / M31) protein is Cytidylate kinase.